The chain runs to 439 residues: 3-phosphoshikimate 1-carboxyvinyltransferase (439 aa).

Residues Lys-29 and Arg-34 each coordinate 3-phosphoshikimate. Lys-29 is a phosphoenolpyruvate binding site. Phosphoenolpyruvate contacts are provided by Gly-99 and Arg-128. 6 residues coordinate 3-phosphoshikimate: Ser-171, Ser-172, Gln-173, Ser-199, Asp-316, and Lys-343. Gln-173 is a binding site for phosphoenolpyruvate. Asp-316 serves as the catalytic Proton acceptor. Positions 347, 390, and 416 each coordinate phosphoenolpyruvate.

It belongs to the EPSP synthase family. Monomer.

The protein localises to the cytoplasm. The enzyme catalyses 3-phosphoshikimate + phosphoenolpyruvate = 5-O-(1-carboxyvinyl)-3-phosphoshikimate + phosphate. Its pathway is metabolic intermediate biosynthesis; chorismate biosynthesis; chorismate from D-erythrose 4-phosphate and phosphoenolpyruvate: step 6/7. Catalyzes the transfer of the enolpyruvyl moiety of phosphoenolpyruvate (PEP) to the 5-hydroxyl of shikimate-3-phosphate (S3P) to produce enolpyruvyl shikimate-3-phosphate and inorganic phosphate. This Deinococcus radiodurans (strain ATCC 13939 / DSM 20539 / JCM 16871 / CCUG 27074 / LMG 4051 / NBRC 15346 / NCIMB 9279 / VKM B-1422 / R1) protein is 3-phosphoshikimate 1-carboxyvinyltransferase.